A 201-amino-acid chain; its full sequence is Transgelin (201 aa).

Ala2 carries the post-translational modification N-acetylalanine. Residues 24–137 (EELEERLVEW…RTLMALGSLA (114 aa)) form the Calponin-homology (CH) domain. Ser166 carries the phosphoserine modification. Lys172 is subject to N6-acetyllysine. Residues 175-200 (IGLQMGSNRGASQAGMTGYGRPRQII) form a Calponin-like repeat. Position 181 is a phosphoserine (Ser181). Arg183 carries the post-translational modification Omega-N-methylarginine.

It belongs to the calponin family.

The protein localises to the cytoplasm. Functionally, actin cross-linking/gelling protein. The polypeptide is Transgelin (Tagln) (Mus musculus (Mouse)).